The sequence spans 331 residues: MKMYYDADADLSLLEGKIVAVIGYGSQGHAQAQNLKDSGVNVIIGLRPDSNRVKEAQAYGFEVYSVAEAAAKADIIQILIPDEKQGKVYREEIAPYLTEGKALCFSHGFNIHFGQIQPPKNVDVFMVAPKSPGHMVRRMYTMGAGVPTLIAVYQDATGRAKDLALAYAKGTGGTRAGVIETTFREETETDLFGEQAVLCGGASALVKAGFETLVEAGYAPEMAYFECLHELKLIVDLMYEGGISWMRYSISDTAQWGDMNIGPRIITEETKKEMKKVLREIQEGTFAKEWLLENEVNRPKFNALAKADENHEIEIVGKKLRAMMPWLKTAK.

The region spanning 1-181 (MKMYYDADAD…GGTRAGVIET (181 aa)) is the KARI N-terminal Rossmann domain. Residues 24 to 27 (YGSQ), R47, S50, and 82 to 85 (DEKQ) contribute to the NADP(+) site. The active site involves H107. Residue G133 participates in NADP(+) binding. The 146-residue stretch at 182–327 (TFREETETDL…KKLRAMMPWL (146 aa)) folds into the KARI C-terminal knotted domain. Mg(2+) contacts are provided by D190, E194, E226, and E230. S251 is a substrate binding site.

Belongs to the ketol-acid reductoisomerase family. Mg(2+) is required as a cofactor.

It catalyses the reaction (2R)-2,3-dihydroxy-3-methylbutanoate + NADP(+) = (2S)-2-acetolactate + NADPH + H(+). The catalysed reaction is (2R,3R)-2,3-dihydroxy-3-methylpentanoate + NADP(+) = (S)-2-ethyl-2-hydroxy-3-oxobutanoate + NADPH + H(+). Its pathway is amino-acid biosynthesis; L-isoleucine biosynthesis; L-isoleucine from 2-oxobutanoate: step 2/4. The protein operates within amino-acid biosynthesis; L-valine biosynthesis; L-valine from pyruvate: step 2/4. In terms of biological role, involved in the biosynthesis of branched-chain amino acids (BCAA). Catalyzes an alkyl-migration followed by a ketol-acid reduction of (S)-2-acetolactate (S2AL) to yield (R)-2,3-dihydroxy-isovalerate. In the isomerase reaction, S2AL is rearranged via a Mg-dependent methyl migration to produce 3-hydroxy-3-methyl-2-ketobutyrate (HMKB). In the reductase reaction, this 2-ketoacid undergoes a metal-dependent reduction by NADPH to yield (R)-2,3-dihydroxy-isovalerate. This chain is Ketol-acid reductoisomerase (NADP(+)), found in Heliobacterium modesticaldum (strain ATCC 51547 / Ice1).